A 283-amino-acid polypeptide reads, in one-letter code: Phosphate import ATP-binding protein PstB 2 (283 aa).

One can recognise an ABC transporter domain in the interval 36–278; it reads LQVKQFNFYY…PKKKQTEDYI (243 aa). 69-76 contacts ATP; sequence GPSGCGKS.

Belongs to the ABC transporter superfamily. Phosphate importer (TC 3.A.1.7) family. The complex is composed of two ATP-binding proteins (PstB), two transmembrane proteins (PstC and PstA) and a solute-binding protein (PstS).

It is found in the cell inner membrane. It carries out the reaction phosphate(out) + ATP + H2O = ADP + 2 phosphate(in) + H(+). Part of the ABC transporter complex PstSACB involved in phosphate import. Responsible for energy coupling to the transport system. This Nitrosococcus oceani (strain ATCC 19707 / BCRC 17464 / JCM 30415 / NCIMB 11848 / C-107) protein is Phosphate import ATP-binding protein PstB 2.